A 417-amino-acid polypeptide reads, in one-letter code: UDP-N-acetylglucosamine 1-carboxyvinyltransferase (417 aa).

22–23 (KN) contributes to the phosphoenolpyruvate binding site. Arginine 92 provides a ligand contact to UDP-N-acetyl-alpha-D-glucosamine. Cysteine 116 functions as the Proton donor in the catalytic mechanism. At cysteine 116 the chain carries 2-(S-cysteinyl)pyruvic acid O-phosphothioketal. Positions 304 and 326 each coordinate UDP-N-acetyl-alpha-D-glucosamine.

Belongs to the EPSP synthase family. MurA subfamily.

Its subcellular location is the cytoplasm. It catalyses the reaction phosphoenolpyruvate + UDP-N-acetyl-alpha-D-glucosamine = UDP-N-acetyl-3-O-(1-carboxyvinyl)-alpha-D-glucosamine + phosphate. It functions in the pathway cell wall biogenesis; peptidoglycan biosynthesis. In terms of biological role, cell wall formation. Adds enolpyruvyl to UDP-N-acetylglucosamine. The protein is UDP-N-acetylglucosamine 1-carboxyvinyltransferase of Geobacter sulfurreducens (strain ATCC 51573 / DSM 12127 / PCA).